We begin with the raw amino-acid sequence, 161 residues long: Phosphopantetheine adenylyltransferase (161 aa).

A substrate-binding site is contributed by S9. ATP is bound by residues 9–10 (SF) and H17. Substrate contacts are provided by K41, L73, and K87. Residues 88–90 (GLR), E98, and 122–128 (YSFVSSS) each bind ATP.

It belongs to the bacterial CoaD family. As to quaternary structure, homohexamer. It depends on Mg(2+) as a cofactor.

The protein localises to the cytoplasm. It carries out the reaction (R)-4'-phosphopantetheine + ATP + H(+) = 3'-dephospho-CoA + diphosphate. Its pathway is cofactor biosynthesis; coenzyme A biosynthesis; CoA from (R)-pantothenate: step 4/5. Reversibly transfers an adenylyl group from ATP to 4'-phosphopantetheine, yielding dephospho-CoA (dPCoA) and pyrophosphate. The polypeptide is Phosphopantetheine adenylyltransferase (Mycobacteroides abscessus (strain ATCC 19977 / DSM 44196 / CCUG 20993 / CIP 104536 / JCM 13569 / NCTC 13031 / TMC 1543 / L948) (Mycobacterium abscessus)).